A 240-amino-acid polypeptide reads, in one-letter code: Ribonuclease PH (240 aa).

Phosphate is bound by residues R87 and 125 to 127; that span reads GTR.

The protein belongs to the RNase PH family. As to quaternary structure, homohexameric ring arranged as a trimer of dimers.

The catalysed reaction is tRNA(n+1) + phosphate = tRNA(n) + a ribonucleoside 5'-diphosphate. In terms of biological role, phosphorolytic 3'-5' exoribonuclease that plays an important role in tRNA 3'-end maturation. Removes nucleotide residues following the 3'-CCA terminus of tRNAs; can also add nucleotides to the ends of RNA molecules by using nucleoside diphosphates as substrates, but this may not be physiologically important. Probably plays a role in initiation of 16S rRNA degradation (leading to ribosome degradation) during starvation. This chain is Ribonuclease PH, found in Pseudomonas putida (strain GB-1).